The chain runs to 107 residues: N(4)-acetylcytidine amidohydrolase (107 aa).

The region spanning 9–105 (TFFEFLTPLI…KLFVIEYELI (97 aa)) is the ASCH domain. The active-site Proton acceptor is Lys23. The active-site Nucleophile is the Thr26. Glu76 serves as the catalytic Proton donor.

It belongs to the N(4)-acetylcytidine amidohydrolase family.

It catalyses the reaction N(4)-acetylcytidine + H2O = cytidine + acetate + H(+). It carries out the reaction N(4)-acetyl-2'-deoxycytidine + H2O = 2'-deoxycytidine + acetate + H(+). The enzyme catalyses N(4)-acetylcytosine + H2O = cytosine + acetate + H(+). Functionally, catalyzes the hydrolysis of N(4)-acetylcytidine (ac4C). In Vibrio parahaemolyticus serotype O3:K6 (strain RIMD 2210633), this protein is N(4)-acetylcytidine amidohydrolase.